Here is a 312-residue protein sequence, read N- to C-terminus: MLSTMAPGSTVGTLVANMTSVNATEDACTKSYSAFLSGMTSLLLVLLILLTLAGILFIIFVRKLVHRMDVWLIALLIELLLWVLGKMIQEFSSTGLCLLTQNMMFLGLMCSVWTHLGMALEKTLALFSRTPKRTSHRNVCLYLMGVFCLVLLLIIILLITMGPDANLNRGPNMCREGPTKGMHTAVQGLKAGCYLLAAVLIVLLTVIIIWKLLRTKFGRKPRLICNVTFTGLICAFSWFMLSLPLLFLGEAGSLGFDCTESLVARYYPGPAACLALLLIILYAWSFSHFMDSLKNQVTVTARYFRRVPSQST.

Residues 1-40 are Extracellular-facing; it reads MLSTMAPGSTVGTLVANMTSVNATEDACTKSYSAFLSGMT. Cystine bridges form between C28/C258 and C97/C174. A helical membrane pass occupies residues 41 to 61; sequence SLLLVLLILLTLAGILFIIFV. Residues 62–67 are Cytoplasmic-facing; the sequence is RKLVHR. A helical transmembrane segment spans residues 68-88; that stretch reads MDVWLIALLIELLLWVLGKMI. Residues 89-95 are Extracellular-facing; sequence QEFSSTG. A helical membrane pass occupies residues 96–116; that stretch reads LCLLTQNMMFLGLMCSVWTHL. Residues 117-138 are Cytoplasmic-facing; it reads GMALEKTLALFSRTPKRTSHRN. The chain crosses the membrane as a helical span at residues 139-159; sequence VCLYLMGVFCLVLLLIIILLI. At 160–192 the chain is on the extracellular side; the sequence is TMGPDANLNRGPNMCREGPTKGMHTAVQGLKAG. The chain crosses the membrane as a helical span at residues 193 to 213; that stretch reads CYLLAAVLIVLLTVIIIWKLL. The Cytoplasmic segment spans residues 214–228; sequence RTKFGRKPRLICNVT. The helical transmembrane segment at 229–249 threads the bilayer; sequence FTGLICAFSWFMLSLPLLFLG. Residues 250–269 are Extracellular-facing; the sequence is EAGSLGFDCTESLVARYYPG. A helical membrane pass occupies residues 270 to 290; that stretch reads PAACLALLLIILYAWSFSHFM. Over 291 to 312 the chain is Cytoplasmic; sequence DSLKNQVTVTARYFRRVPSQST.

Belongs to the Epstein-Barr virus BILF1 protein family. In terms of assembly, interacts with host CXCR4 to form higher-order heterooligomers. Interacts with host Gi heterotrimer.

The protein resides in the host cell membrane. It is found in the host mitochondrion outer membrane. In terms of biological role, constitutively active, ligand-independent G protein-coupled receptor that has immunoevasive and oncogenic activities. Couples with the host inhibitory G protein (Gi) in order to disrupt the host chemokine signaling. As a consequence of its constitutive activity, mediates host CXCR4 inhibition. Enhances degradation of host major histocompatibility complex class I antigens via lysosomes, thereby modulating the antigen presentation to cytotoxic T cells. Targets selectively HLA-A, HLA-Band HLA-E molecules. Targets also newly synthesized MHC-I/peptide complexes en route to the host cell surface. Inhibits the host EIF2AK2/PKR phosphorylation. Displays tranforming activity. Utilizes its C-terminal tail to trigger host MAVS UFMylation via PARK2, resulting in selective MAVS removal from mitochondrial membranes and routing to lysosomes to prevent viral activation of the NLRP3 inflammasome. This is G-protein coupled receptor BILF1 from Homo sapiens (Human).